We begin with the raw amino-acid sequence, 384 residues long: MTENTSHRIMIVAGEASGDLHGAGLVREALRLDPTLSFFGIGGPRMREAGVETLVDSSEMAVVGIVEVLAHIGVISRAFMTLRQVIVSNPPDLLILIDYPDFNMLLARVARRHGVKVLYYISPQVWAWRTGRVKTIGRLVDRMAVVFPFEVPFYERAGVPVSFVGHPLADRVRPTMGRDEALASFGLDPGRRVVGLFPGSRRGEIAKLFPVILESAQQLRERYPDIQFILPLASSLTDGDIAPLLAASGLDVTVTQDRVYDVMQVCDAIITVSGTVTLEIALMGVPMVIIYKVSPLTYQVGKRLIRVDHIGICNIVAGERVVPELIQDDASADRIAAEIGRYLDDPAYAEKTRAGLAMVKEKLGTGGCSERVAGIVLEMLGKQV.

It belongs to the LpxB family.

It catalyses the reaction a lipid X + a UDP-2-N,3-O-bis[(3R)-3-hydroxyacyl]-alpha-D-glucosamine = a lipid A disaccharide + UDP + H(+). It participates in bacterial outer membrane biogenesis; LPS lipid A biosynthesis. Condensation of UDP-2,3-diacylglucosamine and 2,3-diacylglucosamine-1-phosphate to form lipid A disaccharide, a precursor of lipid A, a phosphorylated glycolipid that anchors the lipopolysaccharide to the outer membrane of the cell. This Geobacter sulfurreducens (strain ATCC 51573 / DSM 12127 / PCA) protein is Lipid-A-disaccharide synthase.